The chain runs to 1737 residues: Myosin-M heavy chain (1737 aa).

The Myosin N-terminal SH3-like domain occupies 4–55 (LEGDIVWVPHTVNGYCRGKIIGYNEKNQVTVRLLELNEEIKINEQLIQNYNQ). Positions 59–886 (KDFSDMVEIQ…LYIYLEKKRY (828 aa)) constitute a Myosin motor domain. Position 154–161 (154–161 (GESGSGKT)) interacts with ATP. Positions 640–727 (KSNDNNSNNN…NNNSSNNKKS (88 aa)) are disordered. Composition is skewed to low complexity over residues 641–663 (SNDN…SSQS) and 679–724 (NSGS…SSNN). An actin-binding region spans residues 754–761 (YIRCIKPN). IQ domains are found at residues 889 to 918 (LVDS…SSLF) and 912 to 941 (NKES…LENK). The stretch at 926 to 1039 (QRAKKDFEQL…KKKNEQNLSL (114 aa)) forms a coiled coil. The span at 947 to 1028 (RKKELERQRK…IEKKRKEEEK (82 aa)) shows a compositional bias: basic and acidic residues. Disordered regions lie at residues 947–1099 (RKKE…PSTK), 1117–1199 (LHGS…PNFN), 1266–1290 (GINK…ANSS), and 1304–1364 (SLST…SNED). A compositionally biased stretch (low complexity) spans 1044 to 1070 (ITNSPSLINTTTTTTTTTTTTTNTSSP). Pro residues predominate over residues 1071 to 1081 (PLSPPISPRPS). Residues 1082-1098 (TPSSTSSSSSTTSSPST) show a composition bias toward low complexity. The segment covering 1121-1131 (SHSDKNSKEDN) has biased composition (basic and acidic residues). Low complexity predominate over residues 1132–1141 (NSNNNNNGDS). Positions 1143 to 1153 (IILSSDSSFGQ) are enriched in polar residues. The span at 1162 to 1171 (PTPPPPPPLK) shows a compositional bias: pro residues. Composition is skewed to polar residues over residues 1180–1198 (GVEN…SPNF) and 1274–1288 (RTIS…SRAN). The segment covering 1304–1359 (SLSTSTTPSTPTTPKTPTTLSSSSVSTSTSLSSVSSSVSSSSSSSIPTPIIESTPS) has biased composition (low complexity). One can recognise a DH domain in the interval 1389–1572 (FRIKIINELI…SDIVQSINEA (184 aa)). The region spanning 1603–1714 (TLLMEGTVSA…WFKQIKALIQ (112 aa)) is the PH domain.

Belongs to the TRAFAC class myosin-kinesin ATPase superfamily. Myosin family. In terms of assembly, monomer.

It is found in the cytoplasm. Its function is as follows. Myosins are actin-based motor molecules with ATPase activity. Involved in macropinocytosis and remodeling of actin cytoskeleton. The chain is Myosin-M heavy chain (myoM) from Dictyostelium discoideum (Social amoeba).